The sequence spans 89 residues: Large ribosomal subunit protein bL27 (89 aa).

The tract at residues 1-22 is disordered; sequence MAHKKAGGSSRNGRDSESKRLG.

This sequence belongs to the bacterial ribosomal protein bL27 family.

The chain is Large ribosomal subunit protein bL27 from Bartonella tribocorum (strain CIP 105476 / IBS 506).